Here is a 394-residue protein sequence, read N- to C-terminus: Choline/ethanolamine kinase (394 aa).

Positions 1–42 (MAADGTGVVGGGAVGGGLPKDGLQDAKCPEPIPNRRRASSLS) are disordered. Position 2 is an N-acetylalanine (alanine 2). Residues 7-19 (GVVGGGAVGGGLP) show a composition bias toward gly residues. Residues 75-81 (SGGLSNL), arginine 104, 146-152 (QYLPSRP), glutamine 244, and aspartate 264 contribute to the ATP site. Residue 77–79 (GLS) coordinates substrate.

Belongs to the choline/ethanolamine kinase family. As to quaternary structure, homodimer, and heterodimer with CHKA. As to expression, expressed ubiquitously with the highest level in testis.

The catalysed reaction is choline + ATP = phosphocholine + ADP + H(+). The enzyme catalyses ethanolamine + ATP = phosphoethanolamine + ADP + H(+). The protein operates within phospholipid metabolism; phosphatidylethanolamine biosynthesis; phosphatidylethanolamine from ethanolamine: step 1/3. Functionally, has a key role in phospholipid metabolism, and catalyzes the first step of phosphatidylethanolamine and phosphatidylcholine biosynthesis. In Mus musculus (Mouse), this protein is Choline/ethanolamine kinase (Chkb).